The sequence spans 461 residues: MSQSDTIAAIATARGRAALAVVRTSGPAAIEIVDRCFRGDALTDADSHTAHVGVLTDEAGTDIDQVVATVFRAPNSATGEHVVEVSCHGGDLAPKMALQSLLDHGARMAEPGEFTERAFLNGKMDLAQAEAVADLIDATSTKAHQASLTHLKGRYSDLLGDLREELLNLCSLVELEIDFSDEDVEFADRERLEDLLDETEEILGDLLDTYPTGEKLKDGVQVVIGGRPNAGKSTLLNALVGHDRAIVSETPGTTRDEIEAEAEIEGVLFRFVDTAGLRDTADEIEAEGVRRATESIEEADVLFYLYDLTVGLDSQEIAFLQDLADDGSDVQPVVIGNKADRAPDLPVATLDGLTSLKLSALEAREDADEVQPLLDHLTDTVAEHLSRAEASPVVMNQRHRQHLRDALDAVQQAREALDAGVSGDMLTLDLRAALQELGAITGEITNEDVLDQIFSRFCIGK.

(6S)-5-formyl-5,6,7,8-tetrahydrofolate-binding residues include arginine 23, glutamate 84, and lysine 123. One can recognise a TrmE-type G domain in the interval glycine 219–alanine 382. Residues asparagine 229–threonine 234, serine 248–threonine 254, aspartate 273–glycine 276, and asparagine 337–aspartate 340 each bind GTP. Mg(2+)-binding residues include serine 233 and threonine 254. Lysine 461 is a (6S)-5-formyl-5,6,7,8-tetrahydrofolate binding site.

It belongs to the TRAFAC class TrmE-Era-EngA-EngB-Septin-like GTPase superfamily. TrmE GTPase family. Homodimer. Heterotetramer of two MnmE and two MnmG subunits. The cofactor is K(+).

It localises to the cytoplasm. Exhibits a very high intrinsic GTPase hydrolysis rate. Involved in the addition of a carboxymethylaminomethyl (cmnm) group at the wobble position (U34) of certain tRNAs, forming tRNA-cmnm(5)s(2)U34. The polypeptide is tRNA modification GTPase MnmE (Salinibacter ruber (strain DSM 13855 / M31)).